A 372-amino-acid chain; its full sequence is DNA replication and repair protein RecF (372 aa).

ATP is bound at residue 30-37; the sequence is GENAQGKT.

This sequence belongs to the RecF family.

The protein resides in the cytoplasm. The RecF protein is involved in DNA metabolism; it is required for DNA replication and normal SOS inducibility. RecF binds preferentially to single-stranded, linear DNA. It also seems to bind ATP. This chain is DNA replication and repair protein RecF, found in Exiguobacterium sp. (strain ATCC BAA-1283 / AT1b).